The chain runs to 335 residues: 2,4-dienoyl-CoA reductase [(3E)-enoyl-CoA-producing], mitochondrial (335 aa).

The transit peptide at 1–34 directs the protein to the mitochondrion; sequence MKLPARVFFTLGSRLPCGLAPRRFFSYGTKILYQ. N6-acetyllysine; alternate occurs at positions 42 and 49. An N6-succinyllysine; alternate mark is found at lysine 42 and lysine 49. Residue 66–71 coordinates NADP(+); it reads GGGTGL. Phosphothreonine is present on threonine 69. Position 73 is an N6-succinyllysine (lysine 73). Arginine 91 contacts NADP(+). Arginine 91 serves as a coordination point for substrate. Position 97 is an N6-acetyllysine; alternate (lysine 97). Lysine 97 is subject to N6-succinyllysine; alternate. Aspartate 117 serves as a coordination point for NADP(+). Substrate-binding residues include arginine 119, phenylalanine 149, and serine 157. Tyrosine 199 functions as the Proton acceptor in the catalytic mechanism. Residue lysine 214 participates in NADP(+) binding. At lysine 230 the chain carries N6-acetyllysine. 240–243 contributes to the NADP(+) binding site; that stretch reads PGPI. Position 244 is an N6-acetyllysine; alternate (lysine 244). Lysine 244 carries the post-translational modification N6-succinyllysine; alternate. Substrate is bound at residue arginine 251. An N6-acetyllysine; alternate mark is found at lysine 260 and lysine 319. Residues lysine 260 and lysine 319 each carry the N6-succinyllysine; alternate modification.

Belongs to the short-chain dehydrogenases/reductases (SDR) family. 2,4-dienoyl-CoA reductase subfamily. As to quaternary structure, homotetramer. In terms of tissue distribution, heart = liver = pancreas &gt; kidney &gt;&gt; skeletal muscle = lung.

It localises to the mitochondrion. It catalyses the reaction a (2E,4E)-dienoyl-CoA + NADPH + H(+) = a 4,5-saturated-(3E)-enoyl-CoA + NADP(+). It carries out the reaction a (2E,4Z)-dienoyl-CoA + NADPH + H(+) = a 4,5-saturated-(3E)-enoyl-CoA + NADP(+). The enzyme catalyses (2E,4E)-hexadienoyl-CoA + NADPH + H(+) = (3E)-hexenoyl-CoA + NADP(+). In terms of biological role, auxiliary enzyme of beta-oxidation. It participates in the metabolism of unsaturated fatty enoyl-CoA esters having double bonds in both even- and odd-numbered positions in mitochondria. Catalyzes the NADP-dependent reduction of 2,4-dienoyl-CoA to yield trans-3-enoyl-CoA. In Homo sapiens (Human), this protein is 2,4-dienoyl-CoA reductase [(3E)-enoyl-CoA-producing], mitochondrial (DECR1).